A 351-amino-acid polypeptide reads, in one-letter code: Transmembrane protein DDB_G0272716 (351 aa).

N4 and N59 each carry an N-linked (GlcNAc...) asparagine glycan. 2 helical membrane-spanning segments follow: residues 175–195 and 215–235; these read FSSL…TAIG and VVAP…GAFI. N345 carries an N-linked (GlcNAc...) asparagine glycan.

Its subcellular location is the membrane. This chain is Transmembrane protein DDB_G0272716, found in Dictyostelium discoideum (Social amoeba).